The primary structure comprises 115 residues: MKNKFVELVEKSQLRNDLPEFNPGDSITVNLWIKEGDKQRIQAFKGFVLRKRNRGLHSAFTVRKMSSGMGVERTFQTHSPLIDSIIVEKRADVRRAKLYYMRGLTGKAARIKEKV.

This sequence belongs to the bacterial ribosomal protein bL19 family.

Functionally, this protein is located at the 30S-50S ribosomal subunit interface and may play a role in the structure and function of the aminoacyl-tRNA binding site. The protein is Large ribosomal subunit protein bL19 of Francisella tularensis subsp. holarctica (strain FTNF002-00 / FTA).